The chain runs to 154 residues: MLDIFIDADACPVKEETFRVALRYDLRVFLVANAPLRLPPQGRVELVVVPGSFDAADDWIAERIDQGDIAVTSDIPLAKRCLDKGARVVPPNGRQFTPANIGAALASRALMQDLREMARADGTALRGNAPFSAQDRSRFLQELDTVINAVRRGR.

The protein belongs to the UPF0178 family.

The polypeptide is UPF0178 protein RC1_2062 (Rhodospirillum centenum (strain ATCC 51521 / SW)).